We begin with the raw amino-acid sequence, 130 residues long: Large ribosomal subunit protein bL19 (130 aa).

It belongs to the bacterial ribosomal protein bL19 family.

In terms of biological role, this protein is located at the 30S-50S ribosomal subunit interface and may play a role in the structure and function of the aminoacyl-tRNA binding site. The polypeptide is Large ribosomal subunit protein bL19 (Burkholderia ambifaria (strain ATCC BAA-244 / DSM 16087 / CCUG 44356 / LMG 19182 / AMMD) (Burkholderia cepacia (strain AMMD))).